The primary structure comprises 69 residues: DNA-directed RNA polymerase subunit epsilon (69 aa).

The protein belongs to the RNA polymerase subunit epsilon family. As to quaternary structure, RNAP is composed of a core of 2 alpha, a beta and a beta' subunit. The core is associated with a delta subunit, and at least one of epsilon or omega. When a sigma factor is associated with the core the holoenzyme is formed, which can initiate transcription.

The enzyme catalyses RNA(n) + a ribonucleoside 5'-triphosphate = RNA(n+1) + diphosphate. In terms of biological role, a non-essential component of RNA polymerase (RNAP). The sequence is that of DNA-directed RNA polymerase subunit epsilon from Bacillus pumilus (strain SAFR-032).